The chain runs to 312 residues: MKRSRGSSDSLSGFLPIRHSTTDKQISPRPTTTGFLYSGAGDYSQMFDALEDDGSLEDLGGVGHASSTAAEKKRRLGVEQVKALEKNFEIDNKLEPERKVKLAQELGLQPRQVAIWFQNRRARWKTKQLERDYGVLKSNFDALKRNRDSLQRDNDSLLGQIKELKAKLNVEGVKGIEENGALKAVEANQSVMANNEVLELSHRSPSPPPHIPTDAPTSELAFEMFSIFPRTENFRDDPADSSDSSAVLNEEYSPNTVEAAGAVAATTVEMSTMGCFSQFVKMEEHEDLFSGEEACKLFADNEQWYCSDQWNS.

The disordered stretch occupies residues 1 to 33 (MKRSRGSSDSLSGFLPIRHSTTDKQISPRPTTT). Positions 23 to 33 (DKQISPRPTTT) are enriched in polar residues. Positions 69-128 (AAEKKRRLGVEQVKALEKNFEIDNKLEPERKVKLAQELGLQPRQVAIWFQNRRARWKTKQ) form a DNA-binding region, homeobox. The interval 129–164 (LERDYGVLKSNFDALKRNRDSLQRDNDSLLGQIKEL) is leucine-zipper.

This sequence belongs to the HD-ZIP homeobox family. Class I subfamily. Interacts with DNA as homodimer. Widely expressed.

It is found in the nucleus. Probable transcription factor that acts as a positive regulator of ABA-responsiveness, mediating the inhibitory effect of ABA on growth during seedling establishment. Binds to the DNA sequence 5'-CAATNATTG-3'. The chain is Homeobox-leucine zipper protein ATHB-5 (ATHB-5) from Arabidopsis thaliana (Mouse-ear cress).